The primary structure comprises 265 residues: Small ribosomal subunit protein uS2 (265 aa).

This sequence belongs to the universal ribosomal protein uS2 family.

In Gluconobacter oxydans (strain 621H) (Gluconobacter suboxydans), this protein is Small ribosomal subunit protein uS2.